The sequence spans 389 residues: Lipid-A-disaccharide synthase (389 aa).

Belongs to the LpxB family.

It carries out the reaction a lipid X + a UDP-2-N,3-O-bis[(3R)-3-hydroxyacyl]-alpha-D-glucosamine = a lipid A disaccharide + UDP + H(+). Its pathway is bacterial outer membrane biogenesis; LPS lipid A biosynthesis. Functionally, condensation of UDP-2,3-diacylglucosamine and 2,3-diacylglucosamine-1-phosphate to form lipid A disaccharide, a precursor of lipid A, a phosphorylated glycolipid that anchors the lipopolysaccharide to the outer membrane of the cell. The chain is Lipid-A-disaccharide synthase from Burkholderia orbicola (strain MC0-3).